Reading from the N-terminus, the 168-residue chain is Photosystem I assembly protein Ycf3 (168 aa).

TPR repeat units follow at residues 35–68 (AFTYYRDGMSAQSEGNYAEALQNYYEATRPEIDP), 72–105 (SYILYNIGLIHTSNGEHTKALEYYFRALERNPFL), and 120–153 (GEQAILQGDSEIAEAWSDQAAEYWKQAIALTPGN).

Belongs to the Ycf3 family.

The protein localises to the plastid. It is found in the chloroplast thylakoid membrane. Functionally, essential for the assembly of the photosystem I (PSI) complex. May act as a chaperone-like factor to guide the assembly of the PSI subunits. The sequence is that of Photosystem I assembly protein Ycf3 from Lemna minor (Common duckweed).